A 390-amino-acid polypeptide reads, in one-letter code: GTPase Obg (390 aa).

Residues 1–159 (MKFVDEATIK…RELRLELLLL (159 aa)) enclose the Obg domain. The OBG-type G domain maps to 160–333 (ADVGMLGLPN…LCDELADFMD (174 aa)). Residues 166-173 (GLPNAGKS), 191-195 (FTTLI), 213-216 (DIPG), 283-286 (NKTD), and 314-316 (AAV) each bind GTP. Ser-173 and Thr-193 together coordinate Mg(2+).

The protein belongs to the TRAFAC class OBG-HflX-like GTPase superfamily. OBG GTPase family. Monomer. Mg(2+) is required as a cofactor.

The protein resides in the cytoplasm. Its function is as follows. An essential GTPase which binds GTP, GDP and possibly (p)ppGpp with moderate affinity, with high nucleotide exchange rates and a fairly low GTP hydrolysis rate. Plays a role in control of the cell cycle, stress response, ribosome biogenesis and in those bacteria that undergo differentiation, in morphogenesis control. The chain is GTPase Obg from Aliivibrio fischeri (strain MJ11) (Vibrio fischeri).